The sequence spans 270 residues: 4-hydroxy-tetrahydrodipicolinate reductase (270 aa).

7 to 12 (GANGKM) is an NAD(+) binding site. R34 lines the NADP(+) pocket. Residues 97-99 (GTT) and 121-124 (SGNM) each bind NAD(+). The active-site Proton donor/acceptor is H155. H156 provides a ligand contact to (S)-2,3,4,5-tetrahydrodipicolinate. Catalysis depends on K159, which acts as the Proton donor. 165-166 (GT) is a (S)-2,3,4,5-tetrahydrodipicolinate binding site.

Belongs to the DapB family.

It is found in the cytoplasm. The catalysed reaction is (S)-2,3,4,5-tetrahydrodipicolinate + NAD(+) + H2O = (2S,4S)-4-hydroxy-2,3,4,5-tetrahydrodipicolinate + NADH + H(+). It carries out the reaction (S)-2,3,4,5-tetrahydrodipicolinate + NADP(+) + H2O = (2S,4S)-4-hydroxy-2,3,4,5-tetrahydrodipicolinate + NADPH + H(+). It participates in amino-acid biosynthesis; L-lysine biosynthesis via DAP pathway; (S)-tetrahydrodipicolinate from L-aspartate: step 4/4. In terms of biological role, catalyzes the conversion of 4-hydroxy-tetrahydrodipicolinate (HTPA) to tetrahydrodipicolinate. This is 4-hydroxy-tetrahydrodipicolinate reductase from Bartonella quintana (strain Toulouse) (Rochalimaea quintana).